The following is a 1843-amino-acid chain: MIFNSFLLGNLLSLCMKIINSVVVVGLYYGFLTTFSIGPSYLFLLRARVMEEGTEKEVSATTGFITGQLMMFISIYYAPLHLALGRPHTITVLVLPYLLFHFFWNNHKHFFDYGSTTRNSMRNLSIQCVFLNNLIFQLFNHFILPSPTLARLVNIYMFRCNNKMLFVTSSFVGWLIGHILFMKWVGLVLFWIRQNRSIRSNKYLVSELRNSMARIRIFSILLFITCVYYLGRIPSPIVTKKLKETSKTEEREESEEETDVEIETTSETKGTKQEQEGAAEKEVKDDKDLFWFEKPLVTLLFDYKRWNRPLRYIKNERFENAVRNEMSQYFFYTCISDGKQRISFTYPPSLSTFFEMIQKKLFLCTTEKISSEELYNHWAYTNEQKRNNLSKEFINRIETLDEGSLDLDILEKKTRLCNDENEQKCLPKIYDPFLNGPHRGTIQNLYSHSSMNNLLITSIKDSIKTLWINKYQGILDTDCREFEKEFAEEPMPNLNLKSPSSQGKFYSENQSKNFFDAATTYPNDQTIIDIEESLEINEIKKTVPRWLYKLTDDLEEEEIENDEESKPDHGIRSRKAKRVVIFTDNEKNQNTPTSTTETTSTAETTSTTETTSTTKNTSTTKNTSTTETTSTTENENTSNQDQSDEVALTRYSQQPDFRRDLIKGSMRAQRRKTVTWELFQATVRSPLFLDRVDKTFFFSFDISGTLKYFFRNWMGKDAEFKISNSEEEDTKEKEKKREEKRQENERIRISETWDTIIFAQAIRGYMLVTQSILRKYIVLPSLIIAKNIGRMLLFQFPEWHEDLKAWNKEMHVKCTYNGVQLSEKEFPKNWLTDGIQIKILFPFCLKPWHRSKVQFDHRDPMKKKGKPENFCFLTVWGMEAELPFGSPRKRPSFFEPIWKEIEKNIIKMKKKCFIALRILKERTKWFIRVSKEKTRWVIKIFLFIKRIMKELAKAKVSPIPLFGLREIDESSINTNQKYYINIKSNQIIHESPIRIRSLDWINYSLTAKKIKDVVDRTSTIRNQIEKITKDKKKLFLTPDRNINPNKIGCDDKGLESLKKIWQKLKRRSNRLIRKCYYFLKFFIERIYTDILFCIINSLRIKVKLFLEAKNKLFYKNSSNDETNKKGIDETNPNTIHFISTIKKSLSNINNSNNNSQIFCDLDSLSQAYVFYKLSQTQVFNKYHLRSVLQYRGTLLFLKDRIKDSFGTQGIFHSESGHKKLRNFRMNEWKNWLRGRYHYQYDFSQTRWSRLVPQKWRNRIHQRCMVQTKNSTYSDLYEKDQLIHYEKQNNYAVELNQKDKFKNYKYDKYDRLSHKYIHYEDKKDSYIYRSPLQVNEAKEFLYNYNTYNYSTYNPKLFFMSGDISLNNYLREDSDTEKNLDRKYFDWKIFNFCLRTKIDIEYWTNMDIGANVNKKTKTQTNYYQIIDKKDLFSIAIHKQINPAKQTKTSFDWMAMNEEILNCPISNLELWFFPEFVSFYNAYKIQPWTIPINLLLLNFNGNENVSEKQNINGKEKKDLPILSKSNQKKSLELKNKEEKKKPAQENIGSDTQKQGNPGSDPSTQQKDIKKNVKEDYDGRSDIQKRKKKKQSTGNIAAELDLFLKRYFLFQLRWDNPLNKKIINNVKVYCLLLRLKNPKEIAIASIQRDEMSLDVMPISKTLTLAKLINKGMLIIEPARLSIKRDGQFLLYQTITISRVHKNKHQTNQRYQEKRNVDKNGLEKSIARHEKLVGNRDKNPLLVLENILSSQRRRELRIRICLNSGNVNVVDRNPVFCNGNNASNCDQFLNEERHLDIDTNKFLKFKLLLWPNYRLEDLACINRYWFDTNNGSRFSMSRIRMYPQLRIS.

6 consecutive transmembrane segments (helical) span residues 18 to 38 (IINS…FSIG), 64 to 84 (FITG…HLAL), 87 to 107 (PHTI…WNNH), 124 to 144 (LSIQ…HFIL), 172 to 192 (VGWL…LFWI), and 217 to 237 (IFSI…PSPI). Disordered stretches follow at residues 244–281 (ETSK…AAEK), 557–576 (EEIE…SRKA), 582–647 (FTDN…DEVA), 724–744 (NSEE…RQEN), and 1527–1586 (SLEL…KKKK). Positions 251–264 (REESEEETDVEIET) are enriched in acidic residues. A compositionally biased stretch (basic and acidic residues) spans 269 to 281 (KGTKQEQEGAAEK). The segment covering 590–639 (NTPTSTTETTSTAETTSTTETTSTTKNTSTTKNTSTTETTSTTENENTSN) has biased composition (low complexity). Basic and acidic residues-rich tracts occupy residues 730-744 (TKEK…RQEN) and 1527-1540 (SLEL…KKPA). Over residues 1543 to 1562 (NIGSDTQKQGNPGSDPSTQQ) the composition is skewed to polar residues. Over residues 1563–1580 (KDIKKNVKEDYDGRSDIQ) the composition is skewed to basic and acidic residues.

Belongs to the TIC214 family. As to quaternary structure, part of the Tic complex.

The protein localises to the plastid. It is found in the chloroplast inner membrane. Its function is as follows. Involved in protein precursor import into chloroplasts. May be part of an intermediate translocation complex acting as a protein-conducting channel at the inner envelope. This is Protein TIC 214 from Nandina domestica (Heavenly bamboo).